The chain runs to 459 residues: Glutamate--tRNA ligase 2 (459 aa).

A 'HIGH' region motif is present at residues 8–18 (PSPTGYIHIGN). The 'KMSKS' region signature appears at 249-253 (GLSKR). Lysine 252 is a binding site for ATP.

It belongs to the class-I aminoacyl-tRNA synthetase family. Glutamate--tRNA ligase type 1 subfamily. In terms of assembly, monomer.

Its subcellular location is the cytoplasm. The enzyme catalyses tRNA(Glu) + L-glutamate + ATP = L-glutamyl-tRNA(Glu) + AMP + diphosphate. Functionally, catalyzes the attachment of glutamate to tRNA(Glu) in a two-step reaction: glutamate is first activated by ATP to form Glu-AMP and then transferred to the acceptor end of tRNA(Glu). This is Glutamate--tRNA ligase 2 from Bartonella henselae (strain ATCC 49882 / DSM 28221 / CCUG 30454 / Houston 1) (Rochalimaea henselae).